A 524-amino-acid polypeptide reads, in one-letter code: Tyrosine-protein kinase HCK (524 aa).

The disordered stretch occupies residues Met-1–Phe-72. Gly-2 carries the N-myristoyl glycine lipid modification. The S-palmitoyl cysteine moiety is linked to residue Gly-3. Positions Phe-29–Lys-38 are enriched in basic and acidic residues. Phosphotyrosine; by autocatalysis is present on Tyr-50. Over residues Pro-54–Met-68 the composition is skewed to polar residues. In terms of domain architecture, SH3 spans Ser-76–Ser-136. An SH2 domain is found at Trp-142–Cys-239. The residue at position 200 (Thr-200) is a Phosphothreonine. Tyr-207 carries the post-translational modification Phosphotyrosine. A Protein kinase domain is found at Leu-260–Tyr-513. Residues Leu-266–Val-274 and Lys-288 contribute to the ATP site. The active-site Proton acceptor is Asp-379. The residue at position 409 (Tyr-409) is a Phosphotyrosine; by autocatalysis. Ser-460 is modified (phosphoserine). The residue at position 520 (Tyr-520) is a Phosphotyrosine.

Belongs to the protein kinase superfamily. Tyr protein kinase family. SRC subfamily. Interacts with ADAM15. Interacts with FASLG. Interacts with ARRB1 and ARRB2. Interacts with FCGR1A; the interaction may be indirect. Interacts with IL6ST. Interacts (via SH3 domain) with ELMO1. Interacts (via SH3 domain) with TP73. Interacts with YAP1. Interacts with ABL1 and ITGB1, and thereby recruits ABL1 to activated ITGB1. Interacts (via SH2 domain) with FLT3 (tyrosine phosphorylated). Interacts with CBL. Interacts with VAV1, WAS and RAPGEF1. Interacts (via SH3 domain) with WDCP. In terms of processing, phosphorylated on several tyrosine residues. Autophosphorylated. Becomes rapidly phosphorylated upon activation of the immunoglobulin receptors FCGR1A and FCGR2A. Phosphorylation at Tyr-409 increases kinase activity. Phosphorylation at Tyr-520 inhibits kinase activity. Kinase activity is not required for phosphorylation at Tyr-520, suggesting that this site may be a target of other kinases. Post-translationally, ubiquitinated by CBL, leading to its degradation via the proteasome. Isoform 2 palmitoylation at position 2 requires prior myristoylation. Palmitoylation at position 3 is required for caveolar localization of isoform 2. Expressed predominantly in cells of the myeloid and B-lymphoid lineages.

Its subcellular location is the cytoplasmic vesicle. It localises to the secretory vesicle. It is found in the cytoplasm. The protein resides in the cytosol. The protein localises to the membrane. Its subcellular location is the caveola. It localises to the lysosome. It is found in the cell projection. The protein resides in the podosome membrane. The protein localises to the cell membrane. Its subcellular location is the cell junction. It localises to the focal adhesion. It is found in the cytoskeleton. The protein resides in the golgi apparatus. The protein localises to the nucleus. It catalyses the reaction L-tyrosyl-[protein] + ATP = O-phospho-L-tyrosyl-[protein] + ADP + H(+). With respect to regulation, subject to autoinhibition, mediated by intramolecular interactions involving the SH2 and SH3 domains. Kinase activity is also regulated by phosphorylation at regulatory tyrosine residues. Phosphorylation at Tyr-409 is required for optimal activity. Phosphorylation at Tyr-520 inhibits kinase activity. Inhibited by PP1. In terms of biological role, non-receptor tyrosine-protein kinase found in hematopoietic cells that transmits signals from cell surface receptors and plays an important role in the regulation of innate immune responses, including neutrophil, monocyte, macrophage and mast cell functions, phagocytosis, cell survival and proliferation, cell adhesion and migration. Acts downstream of receptors that bind the Fc region of immunoglobulins, such as FCGR1A and FCGR2A, but also CSF3R, PLAUR, the receptors for IFNG, IL2, IL6 and IL8, and integrins, such as ITGB1 and ITGB2. During the phagocytic process, mediates mobilization of secretory lysosomes, degranulation, and activation of NADPH oxidase to bring about the respiratory burst. Plays a role in the release of inflammatory molecules. Promotes reorganization of the actin cytoskeleton and actin polymerization, formation of podosomes and cell protrusions. Inhibits TP73-mediated transcription activation and TP73-mediated apoptosis. Phosphorylates CBL in response to activation of immunoglobulin gamma Fc region receptors. Phosphorylates ADAM15, BCR, ELMO1, FCGR2A, GAB1, GAB2, RAPGEF1, STAT5B, TP73, VAV1 and WAS. The polypeptide is Tyrosine-protein kinase HCK (Hck) (Mus musculus (Mouse)).